Consider the following 80-residue polypeptide: Small ribosomal subunit protein bS18 (80 aa).

It belongs to the bacterial ribosomal protein bS18 family. Part of the 30S ribosomal subunit. Forms a tight heterodimer with protein bS6.

Functionally, binds as a heterodimer with protein bS6 to the central domain of the 16S rRNA, where it helps stabilize the platform of the 30S subunit. The sequence is that of Small ribosomal subunit protein bS18 from Staphylococcus carnosus (strain TM300).